Consider the following 172-residue polypeptide: Adenine phosphoribosyltransferase (172 aa).

It belongs to the purine/pyrimidine phosphoribosyltransferase family. Homodimer.

The protein localises to the cytoplasm. It carries out the reaction AMP + diphosphate = 5-phospho-alpha-D-ribose 1-diphosphate + adenine. Its pathway is purine metabolism; AMP biosynthesis via salvage pathway; AMP from adenine: step 1/1. In terms of biological role, catalyzes a salvage reaction resulting in the formation of AMP, that is energically less costly than de novo synthesis. The chain is Adenine phosphoribosyltransferase from Polynucleobacter necessarius subsp. necessarius (strain STIR1).